A 114-amino-acid chain; its full sequence is Large ribosomal subunit protein uL22 (114 aa).

The protein belongs to the universal ribosomal protein uL22 family. Part of the 50S ribosomal subunit.

This protein binds specifically to 23S rRNA; its binding is stimulated by other ribosomal proteins, e.g. L4, L17, and L20. It is important during the early stages of 50S assembly. It makes multiple contacts with different domains of the 23S rRNA in the assembled 50S subunit and ribosome. Functionally, the globular domain of the protein is located near the polypeptide exit tunnel on the outside of the subunit, while an extended beta-hairpin is found that lines the wall of the exit tunnel in the center of the 70S ribosome. This is Large ribosomal subunit protein uL22 from Desulfitobacterium hafniense (strain DSM 10664 / DCB-2).